A 177-amino-acid chain; its full sequence is Large ribosomal subunit protein uL6 (177 aa).

It belongs to the universal ribosomal protein uL6 family. In terms of assembly, part of the 50S ribosomal subunit.

Functionally, this protein binds to the 23S rRNA, and is important in its secondary structure. It is located near the subunit interface in the base of the L7/L12 stalk, and near the tRNA binding site of the peptidyltransferase center. The chain is Large ribosomal subunit protein uL6 from Afipia carboxidovorans (strain ATCC 49405 / DSM 1227 / KCTC 32145 / OM5) (Oligotropha carboxidovorans).